A 321-amino-acid chain; its full sequence is Lipoyl synthase (321 aa).

7 residues coordinate [4Fe-4S] cluster: Cys68, Cys73, Cys79, Cys94, Cys98, Cys101, and Ser308. One can recognise a Radical SAM core domain in the interval 80-297 (FNHGTATFMI…KVLADELGFT (218 aa)).

The protein belongs to the radical SAM superfamily. Lipoyl synthase family. [4Fe-4S] cluster serves as cofactor.

Its subcellular location is the cytoplasm. The catalysed reaction is [[Fe-S] cluster scaffold protein carrying a second [4Fe-4S](2+) cluster] + N(6)-octanoyl-L-lysyl-[protein] + 2 oxidized [2Fe-2S]-[ferredoxin] + 2 S-adenosyl-L-methionine + 4 H(+) = [[Fe-S] cluster scaffold protein] + N(6)-[(R)-dihydrolipoyl]-L-lysyl-[protein] + 4 Fe(3+) + 2 hydrogen sulfide + 2 5'-deoxyadenosine + 2 L-methionine + 2 reduced [2Fe-2S]-[ferredoxin]. It functions in the pathway protein modification; protein lipoylation via endogenous pathway; protein N(6)-(lipoyl)lysine from octanoyl-[acyl-carrier-protein]: step 2/2. Its function is as follows. Catalyzes the radical-mediated insertion of two sulfur atoms into the C-6 and C-8 positions of the octanoyl moiety bound to the lipoyl domains of lipoate-dependent enzymes, thereby converting the octanoylated domains into lipoylated derivatives. This Shewanella sp. (strain ANA-3) protein is Lipoyl synthase.